The sequence spans 277 residues: Methyltransferase adrK (277 aa).

S-adenosyl-L-methionine-binding positions include 123-124 (DL), 150-151 (DV), and 151-152 (VL).

Belongs to the class I-like SAM-binding methyltransferase superfamily. As to quaternary structure, homodimer.

Its pathway is secondary metabolite biosynthesis; terpenoid biosynthesis. Functionally, methyltransferase; part of the gene cluster that mediates the biosynthesis of andrastins, meroterpenoid compounds that exhibit inhibitory activity against ras farnesyltransferase, suggesting that they could be promising leads for antitumor agents. The first step of the pathway is the synthesis of 3,5-dimethylorsellinic acid (DMOA) by the polyketide synthase adrD via condensation of one acetyl-CoA starter unit with 3 malonyl-CoA units and 2 methylations. DMAO is then converted to farnesyl-DMAO by the prenyltransferase adrG. The methyltransferase adrK catalyzes the methylation of the carboxyl group of farnesyl-DMAO to farnesyl-DMAO methyl ester which is further converted to epoxyfarnesyl-DMAO methyl ester by the FAD-dependent monooxygenase adrH. The terpene cyclase adrI then catalyzes the carbon skeletal rearrangement to generate the andrastin E, the first compound in the pathway having the andrastin scaffold, with the tetracyclic ring system. The post-cyclization tailoring enzymes adrF, adrE, adrJ, and adrA, are involved in the conversion of andrastin E into andrastin A. The short chain dehydrogenase adrF is responsible for the oxidation of the C-3 a hydroxyl group of andrastin E to yield the corresponding ketone, andrastin D. The ketoreductase adrE stereoselectively reduces the carbonyl moiety to reverse the stereochemistry of the C-3 position to yield andrastin F. The acetyltransferase adrJ is the acetyltransferase that attaches the acetyl group to the C-3 hydroxyl group of andrastin F to yield andrastin C. Finally, the cytochrome P450 monooxygenase adrA catalyzes two sequential oxidation reactions of the C-23 methyl group, to generate the corresponding alcohol andrastin B, and aldehyde andrastin A. The chain is Methyltransferase adrK from Penicillium rubens (strain ATCC 28089 / DSM 1075 / NRRL 1951 / Wisconsin 54-1255) (Penicillium chrysogenum).